The following is a 375-amino-acid chain: Alcohol dehydrogenase 1 (375 aa).

Serine 1 bears the N-acetylserine mark. Zn(2+) is bound by residues cysteine 46, histidine 67, cysteine 97, cysteine 100, cysteine 103, cysteine 111, and cysteine 174. NAD(+) is bound by residues 199–204, aspartate 223, lysine 228, 293–295, and arginine 370; these read GLGGVG and VGV.

It belongs to the zinc-containing alcohol dehydrogenase family. Class-I subfamily. In terms of assembly, homodimer. Requires Zn(2+) as cofactor.

The protein localises to the cytoplasm. The catalysed reaction is a primary alcohol + NAD(+) = an aldehyde + NADH + H(+). The enzyme catalyses a secondary alcohol + NAD(+) = a ketone + NADH + H(+). The sequence is that of Alcohol dehydrogenase 1 from Naja naja (Indian cobra).